Consider the following 82-residue polypeptide: Small ribosomal subunit protein uS17 (82 aa).

Belongs to the universal ribosomal protein uS17 family. Part of the 30S ribosomal subunit.

Its function is as follows. One of the primary rRNA binding proteins, it binds specifically to the 5'-end of 16S ribosomal RNA. The protein is Small ribosomal subunit protein uS17 of Ehrlichia ruminantium (strain Gardel).